The sequence spans 215 residues: Phosphatidylserine decarboxylase proenzyme (215 aa).

Catalysis depends on serine 184, which acts as the Schiff-base intermediate with substrate; via pyruvic acid. The residue at position 184 (serine 184) is a Pyruvic acid (Ser); by autocatalysis.

This sequence belongs to the phosphatidylserine decarboxylase family. PSD-A subfamily. In terms of assembly, heterodimer of a large membrane-associated beta subunit and a small pyruvoyl-containing alpha subunit. Pyruvate serves as cofactor. Post-translationally, is synthesized initially as an inactive proenzyme. Formation of the active enzyme involves a self-maturation process in which the active site pyruvoyl group is generated from an internal serine residue via an autocatalytic post-translational modification. Two non-identical subunits are generated from the proenzyme in this reaction, and the pyruvate is formed at the N-terminus of the alpha chain, which is derived from the carboxyl end of the proenzyme. The post-translation cleavage follows an unusual pathway, termed non-hydrolytic serinolysis, in which the side chain hydroxyl group of the serine supplies its oxygen atom to form the C-terminus of the beta chain, while the remainder of the serine residue undergoes an oxidative deamination to produce ammonia and the pyruvoyl prosthetic group on the alpha chain.

Its subcellular location is the cell membrane. It carries out the reaction a 1,2-diacyl-sn-glycero-3-phospho-L-serine + H(+) = a 1,2-diacyl-sn-glycero-3-phosphoethanolamine + CO2. It participates in phospholipid metabolism; phosphatidylethanolamine biosynthesis; phosphatidylethanolamine from CDP-diacylglycerol: step 2/2. Functionally, catalyzes the formation of phosphatidylethanolamine (PtdEtn) from phosphatidylserine (PtdSer). In Ralstonia pickettii (strain 12J), this protein is Phosphatidylserine decarboxylase proenzyme.